Reading from the N-terminus, the 328-residue chain is uncharacterized protein (328 aa).

Serine 170 bears the Phosphoserine mark.

Its subcellular location is the cytoplasm. The protein localises to the nucleus. This is an uncharacterized protein from Schizosaccharomyces pombe (strain 972 / ATCC 24843) (Fission yeast).